A 21-amino-acid polypeptide reads, in one-letter code: Conchiolin protein p20 (21 aa).

The segment covering 1-14 (YQRXSRYYYYXGPP) has biased composition (low complexity). Residues 1 to 21 (YQRXSRYYYYXGPPDDIDDRY) form a disordered region.

Belongs to the N16 matrix protein family. As to quaternary structure, homooligomer; disulfide-linked. May also be disulfide-linked to insoluble organic matrix. According to PubMed:11250534, amino acids 4 and 11 may be sulfated or phosphorylated. By similarity with the N14 matrix protein, amino-acid 4 may be a cysteine involved in a disulfide bond. Component of conchiolin, the organic matrix of nacre. Is dispersed in calcium carbonate and also linked by disulfide bonds to the organic core of nacre.

It localises to the secreted. It is found in the extracellular space. Its subcellular location is the extracellular matrix. Functionally, may be specifically involved in the formation of the nacreous layer. This is Conchiolin protein p20 from Pinctada maxima (Silver-lipped pearl oyster).